Here is a 35-residue protein sequence, read N- to C-terminus: Augerpeptide hheTx5 (35 aa).

Contains 4 disulfide bonds. In terms of tissue distribution, expressed by the venom duct.

The protein resides in the secreted. This chain is Augerpeptide hheTx5, found in Hastula hectica (Sea snail).